The chain runs to 506 residues: Galactose/methyl galactoside import ATP-binding protein MglA (506 aa).

2 ABC transporter domains span residues 14-249 (LTMT…VGRE) and 264-506 (VILE…AKYL). 46–53 (GENGAGKS) is an ATP binding site.

This sequence belongs to the ABC transporter superfamily. Galactose/methyl galactoside importer (TC 3.A.1.2.3) family. As to quaternary structure, the complex is composed of one ATP-binding protein (MglA), two transmembrane proteins (MglC) and a solute-binding protein (MglB).

The protein localises to the cell inner membrane. The catalysed reaction is D-galactose(out) + ATP + H2O = D-galactose(in) + ADP + phosphate + H(+). It catalyses the reaction methyl beta-D-galactoside(out) + ATP + H2O = methyl beta-D-galactoside(in) + ADP + phosphate + H(+). Functionally, part of the ABC transporter complex MglABC involved in galactose/methyl galactoside import. Responsible for energy coupling to the transport system. This is Galactose/methyl galactoside import ATP-binding protein MglA from Mannheimia succiniciproducens (strain KCTC 0769BP / MBEL55E).